An 814-amino-acid chain; its full sequence is Outer membrane usher protein SefC (814 aa).

The signal sequence occupies residues Met1–Gly30. A disulfide bond links Cys792 and Cys813.

Belongs to the fimbrial export usher family.

It localises to the cell outer membrane. Its function is as follows. Involved in the export and assembly of the SefA fimbrial subunit. This is Outer membrane usher protein SefC (sefC) from Salmonella enteritidis.